The primary structure comprises 257 residues: Imidazole glycerol phosphate synthase subunit HisF (257 aa).

Catalysis depends on residues Asp11 and Asp130.

Belongs to the HisA/HisF family. In terms of assembly, heterodimer of HisH and HisF.

The protein localises to the cytoplasm. It carries out the reaction 5-[(5-phospho-1-deoxy-D-ribulos-1-ylimino)methylamino]-1-(5-phospho-beta-D-ribosyl)imidazole-4-carboxamide + L-glutamine = D-erythro-1-(imidazol-4-yl)glycerol 3-phosphate + 5-amino-1-(5-phospho-beta-D-ribosyl)imidazole-4-carboxamide + L-glutamate + H(+). It functions in the pathway amino-acid biosynthesis; L-histidine biosynthesis; L-histidine from 5-phospho-alpha-D-ribose 1-diphosphate: step 5/9. In terms of biological role, IGPS catalyzes the conversion of PRFAR and glutamine to IGP, AICAR and glutamate. The HisF subunit catalyzes the cyclization activity that produces IGP and AICAR from PRFAR using the ammonia provided by the HisH subunit. The protein is Imidazole glycerol phosphate synthase subunit HisF of Tolumonas auensis (strain DSM 9187 / NBRC 110442 / TA 4).